The sequence spans 262 residues: Acyl-[acyl-carrier-protein]--UDP-N-acetylglucosamine O-acyltransferase (262 aa).

This sequence belongs to the transferase hexapeptide repeat family. LpxA subfamily. In terms of assembly, homotrimer.

It is found in the cytoplasm. The catalysed reaction is a (3R)-hydroxyacyl-[ACP] + UDP-N-acetyl-alpha-D-glucosamine = a UDP-3-O-[(3R)-3-hydroxyacyl]-N-acetyl-alpha-D-glucosamine + holo-[ACP]. Its pathway is glycolipid biosynthesis; lipid IV(A) biosynthesis; lipid IV(A) from (3R)-3-hydroxytetradecanoyl-[acyl-carrier-protein] and UDP-N-acetyl-alpha-D-glucosamine: step 1/6. Involved in the biosynthesis of lipid A, a phosphorylated glycolipid that anchors the lipopolysaccharide to the outer membrane of the cell. This chain is Acyl-[acyl-carrier-protein]--UDP-N-acetylglucosamine O-acyltransferase, found in Histophilus somni (strain 2336) (Haemophilus somnus).